Reading from the N-terminus, the 420-residue chain is Glucose-1-phosphate adenylyltransferase (420 aa).

Residues Y107, G173, E188–K189, and S206 each bind alpha-D-glucose 1-phosphate.

The protein belongs to the bacterial/plant glucose-1-phosphate adenylyltransferase family. In terms of assembly, homotetramer.

It carries out the reaction alpha-D-glucose 1-phosphate + ATP + H(+) = ADP-alpha-D-glucose + diphosphate. It participates in glycan biosynthesis; glycogen biosynthesis. Its function is as follows. Involved in the biosynthesis of ADP-glucose, a building block required for the elongation reactions to produce glycogen. Catalyzes the reaction between ATP and alpha-D-glucose 1-phosphate (G1P) to produce pyrophosphate and ADP-Glc. The protein is Glucose-1-phosphate adenylyltransferase of Shewanella sp. (strain MR-4).